Here is a 152-residue protein sequence, read N- to C-terminus: MTITDLLLILFIAALLAYALYDQFIMPRRNGPTLLSIALLRRGRVDSVIFVGLVAILIYNNVTSHGAQMTTWLLSALALMGFYIFWIRTPRIIFKQRGFFFANVWIEYNRIKEMNLSEDGVLVMQLEQRRLLIRVRNIDDLEKIYKLLIENQ.

A run of 3 helical transmembrane segments spans residues 6-26 (LLLI…QFIM), 45-65 (VDSV…VTSH), and 67-87 (AQMT…IFWI).

This sequence belongs to the UPF0266 family.

Its subcellular location is the cell inner membrane. This Salmonella paratyphi C (strain RKS4594) protein is UPF0266 membrane protein YobD.